The following is a 224-amino-acid chain: CMRF35-like molecule 6 (224 aa).

An N-terminal signal peptide occupies residues 1–20 (MTARAWASWRSSALLLLLVP). Over 21–183 (GYFPLSHPMT…HPGSLFSNVR (163 aa)) the chain is Extracellular. The region spanning 22–130 (YFPLSHPMTV…HDPIVEVEVS (109 aa)) is the Ig-like V-type domain. 2 disulfide bridges follow: cysteine 43–cysteine 110 and cysteine 57–cysteine 65. 2 N-linked (GlcNAc...) asparagine glycosylation sites follow: asparagine 90 and asparagine 99. The span at 136–151 (TTTASSPQSSMGTSGP) shows a compositional bias: polar residues. The disordered stretch occupies residues 136–174 (TTTASSPQSSMGTSGPPTKLPVHTWPSVTRKDSPEPSPH). Residues 184–204 (FLLLVLLELPLLLSMLGAVLW) form a helical membrane-spanning segment. Residues 205-224 (VNRPQRSSRSRQNWPKGENQ) lie on the Cytoplasmic side of the membrane.

It belongs to the CD300 family. Present on the surface of monocytes, neutrophils, a proportion of peripheral blood T- and B-lymphocytes and lymphocytic cell lines.

The protein resides in the cell membrane. The protein is CMRF35-like molecule 6 (CD300C) of Homo sapiens (Human).